A 599-amino-acid polypeptide reads, in one-letter code: NADH-quinone oxidoreductase subunit C/D (599 aa).

Residues 1 to 189 (MTDLTTHDLA…DPFVLTKQKE (189 aa)) are NADH dehydrogenase I subunit C. The tract at residues 213-599 (DFMFLNLGPN…IDFVMSDVDR (387 aa)) is NADH dehydrogenase I subunit D.

The protein in the N-terminal section; belongs to the complex I 30 kDa subunit family. It in the C-terminal section; belongs to the complex I 49 kDa subunit family. In terms of assembly, NDH-1 is composed of 13 different subunits. Subunits NuoB, CD, E, F, and G constitute the peripheral sector of the complex.

Its subcellular location is the cell inner membrane. It carries out the reaction a quinone + NADH + 5 H(+)(in) = a quinol + NAD(+) + 4 H(+)(out). NDH-1 shuttles electrons from NADH, via FMN and iron-sulfur (Fe-S) centers, to quinones in the respiratory chain. The immediate electron acceptor for the enzyme in this species is believed to be ubiquinone. Couples the redox reaction to proton translocation (for every two electrons transferred, four hydrogen ions are translocated across the cytoplasmic membrane), and thus conserves the redox energy in a proton gradient. The polypeptide is NADH-quinone oxidoreductase subunit C/D (Pectobacterium carotovorum subsp. carotovorum (strain PC1)).